Consider the following 213-residue polypeptide: tRNA (guanine-N(7)-)-methyltransferase (213 aa).

Glu-38, Glu-63, Asp-91, and Asp-113 together coordinate S-adenosyl-L-methionine. Residue Asp-113 is part of the active site. Substrate contacts are provided by residues Lys-117, Asp-149, and Thr-192–Glu-195.

The protein belongs to the class I-like SAM-binding methyltransferase superfamily. TrmB family.

It carries out the reaction guanosine(46) in tRNA + S-adenosyl-L-methionine = N(7)-methylguanosine(46) in tRNA + S-adenosyl-L-homocysteine. Its pathway is tRNA modification; N(7)-methylguanine-tRNA biosynthesis. Its function is as follows. Catalyzes the formation of N(7)-methylguanine at position 46 (m7G46) in tRNA. The sequence is that of tRNA (guanine-N(7)-)-methyltransferase from Mycoplasmoides gallisepticum (strain R(low / passage 15 / clone 2)) (Mycoplasma gallisepticum).